Reading from the N-terminus, the 106-residue chain is MANNEHVTPGEDDQQITLIDEKGNEELYQVLFTFDSEDYGKSYVLLYPASESDDQEVEIQAFSFTPDENGDASSGDLFPIDDDAEWDMVEEVLNTFLADDDSNLKD.

This sequence belongs to the UPF0473 family.

The protein is UPF0473 protein LSEI_0788 of Lacticaseibacillus paracasei (strain ATCC 334 / BCRC 17002 / CCUG 31169 / CIP 107868 / KCTC 3260 / NRRL B-441) (Lactobacillus paracasei).